The chain runs to 288 residues: UPF0494 membrane protein C212.04c (288 aa).

The next 4 membrane-spanning stretches (helical) occupy residues 107 to 127 (WVLLIIWSIITILTIDKKFKI), 144 to 164 (IWGPIVIYVGLFILLLSAFNY), 174 to 194 (PLISMVIAWVGVVIAAFSVII), and 198 to 218 (IAGVIAAFSVIITATIAGVIA).

It belongs to the UPF0494 family.

It localises to the cytoplasm. It is found in the endoplasmic reticulum. The protein localises to the membrane. This chain is UPF0494 membrane protein C212.04c, found in Schizosaccharomyces pombe (strain 972 / ATCC 24843) (Fission yeast).